The sequence spans 433 residues: 23S rRNA (uracil(1939)-C(5))-methyltransferase RlmD (433 aa).

Positions 10–68 (RTTTRQIITVSVNDLDSFGQGVARHNGKTLFIPGLLPQENAEVTVTEDKKQYARAKVVR) constitute a TRAM domain. 4 residues coordinate [4Fe-4S] cluster: C81, C87, C90, and C162. Q265, F294, N299, E315, N342, and D363 together coordinate S-adenosyl-L-methionine. C389 (nucleophile) is an active-site residue.

This sequence belongs to the class I-like SAM-binding methyltransferase superfamily. RNA M5U methyltransferase family. RlmD subfamily.

It carries out the reaction uridine(1939) in 23S rRNA + S-adenosyl-L-methionine = 5-methyluridine(1939) in 23S rRNA + S-adenosyl-L-homocysteine + H(+). Catalyzes the formation of 5-methyl-uridine at position 1939 (m5U1939) in 23S rRNA. This is 23S rRNA (uracil(1939)-C(5))-methyltransferase RlmD from Shigella sonnei (strain Ss046).